The following is a 401-amino-acid chain: Argininosuccinate synthase (401 aa).

10–18 (AYSGGVDTS) is a binding site for ATP. Tyr-89 provides a ligand contact to L-citrulline. ATP is bound at residue Gly-119. Positions 121, 125, and 126 each coordinate L-aspartate. Residue Asn-125 participates in L-citrulline binding. Positions 129, 177, 186, 262, and 274 each coordinate L-citrulline.

This sequence belongs to the argininosuccinate synthase family. Type 1 subfamily. In terms of assembly, homotetramer.

The protein resides in the cytoplasm. It catalyses the reaction L-citrulline + L-aspartate + ATP = 2-(N(omega)-L-arginino)succinate + AMP + diphosphate + H(+). Its pathway is amino-acid biosynthesis; L-arginine biosynthesis; L-arginine from L-ornithine and carbamoyl phosphate: step 2/3. This is Argininosuccinate synthase from Thermosynechococcus vestitus (strain NIES-2133 / IAM M-273 / BP-1).